The chain runs to 215 residues: Pyridoxine/pyridoxamine 5'-phosphate oxidase (215 aa).

Residues 9–12 (RRDY) and lysine 69 contribute to the substrate site. FMN-binding positions include 64–69 (RILLLK), 79–80 (FT), lysine 86, and glutamine 108. Residues tyrosine 126, arginine 130, and serine 134 each contribute to the substrate site. Residues 143 to 144 (QS) and tryptophan 188 contribute to the FMN site. 194 to 196 (RLH) contacts substrate. Arginine 198 lines the FMN pocket.

Belongs to the pyridoxamine 5'-phosphate oxidase family. In terms of assembly, homodimer. Requires FMN as cofactor.

It carries out the reaction pyridoxamine 5'-phosphate + O2 + H2O = pyridoxal 5'-phosphate + H2O2 + NH4(+). The enzyme catalyses pyridoxine 5'-phosphate + O2 = pyridoxal 5'-phosphate + H2O2. Its pathway is cofactor metabolism; pyridoxal 5'-phosphate salvage; pyridoxal 5'-phosphate from pyridoxamine 5'-phosphate: step 1/1. It participates in cofactor metabolism; pyridoxal 5'-phosphate salvage; pyridoxal 5'-phosphate from pyridoxine 5'-phosphate: step 1/1. Catalyzes the oxidation of either pyridoxine 5'-phosphate (PNP) or pyridoxamine 5'-phosphate (PMP) into pyridoxal 5'-phosphate (PLP). The protein is Pyridoxine/pyridoxamine 5'-phosphate oxidase of Pseudomonas fluorescens (strain ATCC BAA-477 / NRRL B-23932 / Pf-5).